We begin with the raw amino-acid sequence, 270 residues long: MASACASSTIAAVAFSSPSSQKNGSIVGATKASFLGGKRLRVSKFIAPVGSRSVAVSAVAADPDRPLWFPGSTPPEWLDGSLPGDFGFDPLGLGSDPESLKWNAQAELVHSRWAMLGAAGIFIPEFLTKIGVLNTPSWYTAGEQEYFTDTTTLFVIELVLIGWAEGRRWADIIKPGCVNTDPIFPNNKLTGTDVGYPGGLWFDPLGWGSGSPAKIKELRTKEIKNGRLAMLAVMGAWFQHIYTGTGPIDNLFAHLADPGHATIFAAFSPK.

A chloroplast-targeting transit peptide spans 1-41 (MASACASSTIAAVAFSSPSSQKNGSIVGATKASFLGGKRLR). Trp-68 contacts chlorophyll b. Positions 88, 107, and 110 each coordinate chlorophyll a. Arg-112 lines the chlorophyll b pocket. Residues 113–133 (WAMLGAAGIFIPEFLTKIGVL) traverse the membrane as a helical segment. Chlorophyll a is bound at residue Gln-144. A helical transmembrane segment spans residues 146 to 166 (YFTDTTTLFVIELVLIGWAEG). Chlorophyll b contacts are provided by Val-155, Glu-165, and Arg-168. Residues Lys-221, Glu-222, Asn-225, Arg-227, Gln-239, and His-254 each contribute to the chlorophyll a site. The helical transmembrane segment at 228–248 (LAMLAVMGAWFQHIYTGTGPI) threads the bilayer.

It belongs to the light-harvesting chlorophyll a/b-binding (LHC) protein family. The LHC complex consists of chlorophyll a-b binding proteins. Binds at least 14 chlorophylls (8 Chl-a and 6 Chl-b) and carotenoids such as lutein and neoxanthin. is required as a cofactor. Post-translationally, photoregulated by reversible phosphorylation of its threonine residues.

It localises to the plastid. Its subcellular location is the chloroplast thylakoid membrane. Its function is as follows. The light-harvesting complex (LHC) functions as a light receptor, it captures and delivers excitation energy to photosystems with which it is closely associated. This Petunia hybrida (Petunia) protein is Chlorophyll a-b binding protein, chloroplastic.